Consider the following 204-residue polypeptide: Somatotropin (204 aa).

An N-terminal signal peptide occupies residues 1–17 (MERAVLLLSLLSLGVSS). Position 18 is a pyrrolidone carboxylic acid (Gln18). A Zn(2+)-binding site is contributed by His36. Cys69 and Cys177 are oxidised to a cystine. Glu186 serves as a coordination point for Zn(2+). A disulfide bond links Cys194 and Cys202.

This sequence belongs to the somatotropin/prolactin family.

The protein resides in the secreted. Its function is as follows. Growth hormone plays an important role in growth control and involved in the regulation of several anabolic processes. The protein is Somatotropin (gh) of Perca flavescens (American yellow perch).